The following is a 132-amino-acid chain: Small ribosomal subunit protein uS8 (132 aa).

Belongs to the universal ribosomal protein uS8 family. Part of the 30S ribosomal subunit. Contacts proteins S5 and S12.

One of the primary rRNA binding proteins, it binds directly to 16S rRNA central domain where it helps coordinate assembly of the platform of the 30S subunit. This chain is Small ribosomal subunit protein uS8, found in Halothermothrix orenii (strain H 168 / OCM 544 / DSM 9562).